The sequence spans 596 residues: ATP-dependent lipid A-core flippase (596 aa).

The next 6 helical transmembrane spans lie at 34-54 (VWVL…EAGI), 80-100 (AAVV…GYLL), 138-158 (AVVF…ITLV), 164-184 (VVFL…IVAI), 263-283 (QPLT…IAVV), and 292-312 (VGGF…LKHL). An ABC transmembrane type-1 domain is found at 38-321 (VAGVLAMAAV…LMDVNQPLQR (284 aa)). Positions 353 to 589 (IEFSHVSFSY…GGLYAHLHRI (237 aa)) constitute an ABC transporter domain. 389 to 396 (GPSGSGKT) provides a ligand contact to ATP.

Belongs to the ABC transporter superfamily. Lipid exporter (TC 3.A.1.106) family. Homodimer.

The protein resides in the cell inner membrane. It catalyses the reaction ATP + H2O + lipid A-core oligosaccharideSide 1 = ADP + phosphate + lipid A-core oligosaccharideSide 2.. Involved in lipopolysaccharide (LPS) biosynthesis. Translocates lipid A-core from the inner to the outer leaflet of the inner membrane. Transmembrane domains (TMD) form a pore in the inner membrane and the ATP-binding domain (NBD) is responsible for energy generation. The protein is ATP-dependent lipid A-core flippase of Burkholderia thailandensis (strain ATCC 700388 / DSM 13276 / CCUG 48851 / CIP 106301 / E264).